A 902-amino-acid polypeptide reads, in one-letter code: Respiratory burst oxidase homolog protein A (902 aa).

Residues 1-344 (MMNRSEMQKL…KYFLFDNWKR (344 aa)) are Cytoplasmic-facing. Disordered stretches follow at residues 63 to 87 (KSPNHRGAGSNYEDQSLLRQGRSGR) and 107 to 130 (ASSVSSSSARKPPRPQLAKLRRSK). Residues 74–87 (YEDQSLLRQGRSGR) are compositionally biased toward polar residues. The span at 107–116 (ASSVSSSSAR) shows a compositional bias: low complexity. EF-hand-like regions lie at residues 163 to 173 (TMTTNGLLHRS) and 198 to 209 (ENVSGDSININE). 2 EF-hand domains span residues 221 to 256 (DFDSRLRTFFAMVDKDSDGRLNEAEVREIITLSASA) and 265 to 300 (QADEYAALIMEELDPYHYGYIMIENLEILLLQAPMQ). D234, D236, D238, R240, and E245 together coordinate Ca(2+). 2 positions are modified to phosphoserine: S311 and S315. Residues 345–365 (VWVMALWIGAMAGLFTWKFME) traverse the membrane as a helical segment. Residues 366 to 380 (YRKRSAYEVMGVCVC) are Extracellular-facing. Residues 381–401 (IAKGAAETLKLNMAMILLPVC) traverse the membrane as a helical segment. Positions 383–540 (KGAAETLKLN…LFVIVYSLLV (158 aa)) constitute a Ferric oxidoreductase domain. Topologically, residues 402–428 (RNTITWLRTKTKLSAIVPFDDSLNFHK) are cytoplasmic. A helical transmembrane segment spans residues 429–449 (VIAIGISVGVGIHATSHLACD). Topologically, residues 450-484 (FPRLIAADEDQYEPMEKYFGPQTKRYLDFVQSVEG) are extracellular. A helical transmembrane segment spans residues 485 to 505 (VTGIGMVVLMTIAFTLATTWF). The Cytoplasmic portion of the chain corresponds to 506–529 (RRNKLNLPGPLKKITGFNAFWYSH). A helical membrane pass occupies residues 530-550 (HLFVIVYSLLVVHGFYVYLII). Residues 551–709 (EPWYKKTTWM…PAQDYKKFEV (159 aa)) lie on the Extracellular side of the membrane. One can recognise an FAD-binding FR-type domain in the interval 575-703 (IRAFRSSVEA…DGPYGAPAQD (129 aa)). Residues 710–730 (VLLVGLGIGATPMISIVSDII) form a helical membrane-spanning segment. Topologically, residues 731–902 (NNLKGVEEGS…TKFIFHKENF (172 aa)) are cytoplasmic. Residues 738–760 (EGSNRRQSPIHNMVTPPVSPSRK) are disordered.

This sequence belongs to the RBOH (TC 5.B.1.3) family. Monomer and homodimer.

It localises to the membrane. Its function is as follows. Calcium-dependent NADPH oxidase that generates superoxide. This Arabidopsis thaliana (Mouse-ear cress) protein is Respiratory burst oxidase homolog protein A (RBOHA).